The chain runs to 41 residues: U-megalopygitoxin(4)-Mo5 (41 aa).

Positions 1–23 are cleaved as a signal peptide; sequence MKCSLLLVVFAAMVALFAAGTNA.

Belongs to the caterpillar 4 family. Expressed by the venom apparatus.

Its subcellular location is the secreted. Probable toxin. This Megalopyge opercularis (Southern flannel moth) protein is U-megalopygitoxin(4)-Mo5.